A 306-amino-acid polypeptide reads, in one-letter code: Aspartate carbamoyltransferase catalytic subunit (306 aa).

Positions 49 and 50 each coordinate carbamoyl phosphate. Lysine 77 is an L-aspartate binding site. The carbamoyl phosphate site is built by arginine 99, histidine 127, and glutamine 130. L-aspartate contacts are provided by arginine 160 and arginine 211. Carbamoyl phosphate contacts are provided by alanine 250 and proline 251.

The protein belongs to the aspartate/ornithine carbamoyltransferase superfamily. ATCase family. As to quaternary structure, heterododecamer (2C3:3R2) of six catalytic PyrB chains organized as two trimers (C3), and six regulatory PyrI chains organized as three dimers (R2).

It catalyses the reaction carbamoyl phosphate + L-aspartate = N-carbamoyl-L-aspartate + phosphate + H(+). Its pathway is pyrimidine metabolism; UMP biosynthesis via de novo pathway; (S)-dihydroorotate from bicarbonate: step 2/3. In terms of biological role, catalyzes the condensation of carbamoyl phosphate and aspartate to form carbamoyl aspartate and inorganic phosphate, the committed step in the de novo pyrimidine nucleotide biosynthesis pathway. The chain is Aspartate carbamoyltransferase catalytic subunit from Bacillus licheniformis (strain ATCC 14580 / DSM 13 / JCM 2505 / CCUG 7422 / NBRC 12200 / NCIMB 9375 / NCTC 10341 / NRRL NRS-1264 / Gibson 46).